The following is a 377-amino-acid chain: Succinyl-diaminopimelate desuccinylase (377 aa).

Residue H66 participates in Zn(2+) binding. D68 is a catalytic residue. D99 contacts Zn(2+). The Proton acceptor role is filled by E133. The Zn(2+) site is built by E134, E162, and H348.

Belongs to the peptidase M20A family. DapE subfamily. In terms of assembly, homodimer. Zn(2+) serves as cofactor. It depends on Co(2+) as a cofactor.

It catalyses the reaction N-succinyl-(2S,6S)-2,6-diaminopimelate + H2O = (2S,6S)-2,6-diaminopimelate + succinate. The protein operates within amino-acid biosynthesis; L-lysine biosynthesis via DAP pathway; LL-2,6-diaminopimelate from (S)-tetrahydrodipicolinate (succinylase route): step 3/3. Catalyzes the hydrolysis of N-succinyl-L,L-diaminopimelic acid (SDAP), forming succinate and LL-2,6-diaminopimelate (DAP), an intermediate involved in the bacterial biosynthesis of lysine and meso-diaminopimelic acid, an essential component of bacterial cell walls. The sequence is that of Succinyl-diaminopimelate desuccinylase from Methylococcus capsulatus (strain ATCC 33009 / NCIMB 11132 / Bath).